Reading from the N-terminus, the 156-residue chain is Myosin, essential light chain, adductor muscle (156 aa).

EF-hand domains lie at 6-43 (DEID…LGIN) and 81-116 (GTFA…LGER).

In terms of biological role, in molluscan muscle, calcium regulation is associated with myosin rather than with actin. Muscle myosin contains two types of light chains: the catalytic light chain, essential for ATPase activity, and the regulatory light chain, a calcium-binding protein responsible for Ca(2+) dependent binding and Ca(2+) dependent Mg-ATPase activity. The protein is Myosin, essential light chain, adductor muscle of Mizuhopecten yessoensis (Japanese scallop).